Reading from the N-terminus, the 1798-residue chain is U3 small nucleolar RNA-associated protein 10 (1798 aa).

Residues 583 to 620 (LDFQALLPFLLVTLTDPSERVRREAAAALAAVGSLYKK) form an HEAT 1 repeat. Transmembrane regions (helical) follow at residues 942-962 (IQSG…AIVN) and 998-1018 (ALLL…HSVM). HEAT repeat units lie at residues 1042 to 1079 (QTID…AFEH), 1249 to 1286 (LTLV…QNPE), 1293 to 1331 (IRVL…KYGK), and 1754 to 1791 (ALLP…VLGE).

Belongs to the HEATR1/UTP10 family. Component of the ribosomal small subunit (SSU) processome.

It is found in the nucleus. The protein resides in the nucleolus. The protein localises to the membrane. Its function is as follows. Involved in nucleolar processing of pre-18S ribosomal RNA. Involved in ribosome biosynthesis. The sequence is that of U3 small nucleolar RNA-associated protein 10 from Aspergillus fumigatus (strain ATCC MYA-4609 / CBS 101355 / FGSC A1100 / Af293) (Neosartorya fumigata).